A 230-amino-acid chain; its full sequence is Ureidoacrylate amidohydrolase RutB (230 aa).

Asp24 serves as the catalytic Proton acceptor. Lys133 is a catalytic residue. Cys166 acts as the Nucleophile in catalysis.

It belongs to the isochorismatase family. RutB subfamily.

It carries out the reaction (Z)-3-ureidoacrylate + H2O + H(+) = (Z)-3-aminoacrylate + NH4(+) + CO2. It catalyses the reaction (Z)-3-ureidoacrylate + H2O = (Z)-3-aminoacrylate + carbamate + H(+). The catalysed reaction is (Z)-2-methylureidoacrylate + H2O + H(+) = (Z)-2-methylaminoacrylate + NH4(+) + CO2. In terms of biological role, hydrolyzes ureidoacrylate to form aminoacrylate and carbamate. The carbamate hydrolyzes spontaneously, thereby releasing one of the nitrogen atoms of the pyrimidine ring as ammonia and one of its carbon atoms as CO2. The polypeptide is Ureidoacrylate amidohydrolase RutB (Escherichia coli O6:K15:H31 (strain 536 / UPEC)).